Reading from the N-terminus, the 745-residue chain is Polyribonucleotide nucleotidyltransferase (745 aa).

Residues D487 and D493 each coordinate Mg(2+). The KH domain occupies 554-613; it reads PSSTTVKIDKDKIKDIIGPGGKIIKEICETSNAKIDISDDGTVSIYASDRDKIKIALDKI. The S1 motif domain occupies 623–691; it reads GEIFNGTVMK…NKGKAKLTIK (69 aa). Residues 693–732 form a disordered region; it reads AYKDHSSNNTKQKNNVKDDSESEQRRDTSKKRTWNEDNNT. Residues 707–719 show a composition bias toward basic and acidic residues; the sequence is NVKDDSESEQRRD.

The protein belongs to the polyribonucleotide nucleotidyltransferase family. It depends on Mg(2+) as a cofactor.

It is found in the cytoplasm. It catalyses the reaction RNA(n+1) + phosphate = RNA(n) + a ribonucleoside 5'-diphosphate. Functionally, involved in mRNA degradation. Catalyzes the phosphorolysis of single-stranded polyribonucleotides processively in the 3'- to 5'-direction. The chain is Polyribonucleotide nucleotidyltransferase from Rickettsia prowazekii (strain Madrid E).